Consider the following 238-residue polypeptide: Ribose-5-phosphate isomerase A (238 aa).

Substrate is bound by residues 30–33 (SGST), 87–90 (DGAD), and 100–103 (KGGG). The Proton acceptor role is filled by Glu-109. Residue Lys-127 coordinates substrate.

This sequence belongs to the ribose 5-phosphate isomerase family. As to quaternary structure, homodimer.

It catalyses the reaction aldehydo-D-ribose 5-phosphate = D-ribulose 5-phosphate. It functions in the pathway carbohydrate degradation; pentose phosphate pathway; D-ribose 5-phosphate from D-ribulose 5-phosphate (non-oxidative stage): step 1/1. Its function is as follows. Catalyzes the reversible conversion of ribose-5-phosphate to ribulose 5-phosphate. The chain is Ribose-5-phosphate isomerase A from Prochlorococcus marinus (strain MIT 9303).